A 373-amino-acid chain; its full sequence is Tomoregulin-1 (373 aa).

Positions 1-36 are cleaved as a signal peptide; sequence MGAQAPLRLPAAPPLAVCGYTSVLLLFAFCLPGSGA. Over 37-323 the chain is Extracellular; the sequence is SNQPAGGGGD…VPSRQKLTHV (287 aa). Residue Asn56 is glycosylated (N-linked (GlcNAc...) asparagine). The Kazal-like 1 domain occupies 91–138; it reads ACQFQCHTNYIPVCGSNGDTYQNECFLRRAACKHQKDITVVARGPCYS. 3 disulfide bridges follow: Cys92-Cys122, Cys96-Cys115, and Cys104-Cys136. The N-linked (GlcNAc...) asparagine glycan is linked to Asn140. The segment at 140 to 162 is disordered; sequence NGSGSGEGEEEGSGAGAHRKHSK. Positions 182–230 constitute a Kazal-like 2 domain; it reads VCNIDCSGYSFNPVCASDGSSYNNPCFVREASCIRQEQIDIRHLGHCTD. Disulfide bonds link Cys183/Cys214, Cys187/Cys207, Cys196/Cys228, Cys268/Cys281, Cys276/Cys292, and Cys294/Cys303. The EGF-like domain occupies 264–304; the sequence is SHMPCPENLNGYCIHGKCEFIYSTQKASCRCESGYTGQHCE. The chain crosses the membrane as a helical span at residues 324 to 344; it reads LIAAIIGAVQIAIIVAIVMCI. At 345–373 the chain is on the cytoplasmic side; sequence TRKCPKNNRGRRQKQNLGHFTSETSSRMV. Residues 352–373 form a disordered region; it reads NRGRRQKQNLGHFTSETSSRMV. Residues 359 to 373 show a composition bias toward polar residues; sequence QNLGHFTSETSSRMV.

This sequence belongs to the tomoregulin family. May interact with ST14.

It localises to the cell membrane. In terms of biological role, neuron-specific restriction factor that prevents herpes simplex virus 1 (HHV-1) infection in the brain by blocking viral entry. Also able to restrict herpes simplex virus 2 (HHV-2) infection, although to a lesser extent. Acts by preventing the association between the viral glycoprotein D (gD) and its cell surface receptor NECTIN1, thereby inhibiting fusion of the virus and the cell membrane. Also able to prevent the association between the viral glycoprotein B (gB) and MYH9/NMMHC-IIA and MYH10/NMMHC-IIB receptors. The polypeptide is Tomoregulin-1 (Tmeff1) (Rattus norvegicus (Rat)).